Here is a 204-residue protein sequence, read N- to C-terminus: Tat proofreading chaperone DmsD (204 aa).

This sequence belongs to the TorD/DmsD family. DmsD subfamily.

Required for biogenesis/assembly of DMSO reductase, but not for the interaction of the DmsA signal peptide with the Tat system. May be part of a chaperone cascade complex that facilitates a folding-maturation pathway for the substrate protein. The polypeptide is Tat proofreading chaperone DmsD (Escherichia coli O6:H1 (strain CFT073 / ATCC 700928 / UPEC)).